Here is a 381-residue protein sequence, read N- to C-terminus: Gustatory and pheromone receptor 39a, isoform D (381 aa).

Residues Met1 to Ala43 lie on the Cytoplasmic side of the membrane. Residues Trp44–Phe64 traverse the membrane as a helical segment. Residues Pro65–Asn78 are Extracellular-facing. Asn74 carries an N-linked (GlcNAc...) asparagine glycan. The helical transmembrane segment at Cys79–Ile101 threads the bilayer. The Cytoplasmic segment spans residues Gln102–Arg128. A helical membrane pass occupies residues Phe129–Tyr149. Over Gly150 to Tyr172 the chain is Extracellular. Residues Leu173–Leu193 traverse the membrane as a helical segment. At Lys194–Cys234 the chain is on the cytoplasmic side. A helical transmembrane segment spans residues Phe235 to Phe255. Over Tyr256–Ser273 the chain is Extracellular. Residues Leu274–Met294 form a helical membrane-spanning segment. Residues Gly295 to Thr350 lie on the Cytoplasmic side of the membrane. The helical transmembrane segment at Leu351–Met371 threads the bilayer. Topologically, residues Glu372–Phe381 are extracellular. Asn373 is a glycosylation site (N-linked (GlcNAc...) asparagine).

Belongs to the insect chemoreceptor superfamily. Gustatory receptor (GR) family. Gr21a subfamily. In terms of tissue distribution, expressed in the adult labellar chemosensory neurons and adult thorax and abdomen.

Its subcellular location is the cell membrane. In terms of biological role, gustatory receptor which mediates acceptance or avoidance behavior, depending on its substrates. Plays a role in sustaining courtship behavior in males, possibly through the reception of a stimulating arrestant pheromone. This Drosophila melanogaster (Fruit fly) protein is Gustatory and pheromone receptor 39a, isoform D (Gr39a).